Consider the following 446-residue polypeptide: Transcription factor SOX-8 (446 aa).

Disordered stretches follow at residues 1-58 (MLDM…DPAE), 155-259 (AERL…RQNI), and 318-378 (HKSA…PFAG). Positions 40 to 53 (EGLGRAGVAVGGAR) are enriched in gly residues. The dimerization (DIM) stretch occupies residues 58–100 (EAADERFPACIRDAVSQVLKGYDWSLVPMPVRGGGGGALKAKP). Residues 102-170 (VKRPMNAFMV…QHKKDHPDYK (69 aa)) constitute a DNA-binding region (HMG box). 3 stretches are compositionally biased toward basic and acidic residues: residues 155–171 (AERLRVQHKKDHPDYKY), 210–219 (DGHHHGDHTG), and 242–253 (PELKLEGRRPVD). The tract at residues 224 to 298 (PPTPPTTPKT…LPLGGPAPPE (75 aa)) is transactivation domain (TAM). The interval 335 to 446 (RPHIKTEQPS…QPVYTTLTRP (112 aa)) is transactivation domain (TAC). Positions 362 to 378 (SGQSSATPAAPAGPFAG) are enriched in low complexity. Residues 400 to 408 (PGLYQYPCF) carry the 9aaTAD motif. A disordered region spans residues 425 to 446 (LPPAHSPTSHWDQPVYTTLTRP). A compositionally biased stretch (polar residues) spans 430–446 (SPTSHWDQPVYTTLTRP).

It localises to the nucleus. In terms of biological role, transcription factor that may play a role in central nervous system, limb and facial development. May be involved in male sex determination. Binds the consensus motif 5'-[AT][AT]CAA[AT]G-3'. This is Transcription factor SOX-8 from Homo sapiens (Human).